We begin with the raw amino-acid sequence, 315 residues long: 4-hydroxy-3-methylbut-2-enyl diphosphate reductase (315 aa).

Cys-12 provides a ligand contact to [4Fe-4S] cluster. Residues His-41 and His-74 each coordinate (2E)-4-hydroxy-3-methylbut-2-enyl diphosphate. Residues His-41 and His-74 each coordinate dimethylallyl diphosphate. Isopentenyl diphosphate contacts are provided by His-41 and His-74. Cys-96 is a [4Fe-4S] cluster binding site. A (2E)-4-hydroxy-3-methylbut-2-enyl diphosphate-binding site is contributed by His-124. His-124 contacts dimethylallyl diphosphate. His-124 is a binding site for isopentenyl diphosphate. Catalysis depends on Glu-126, which acts as the Proton donor. Position 168 (Thr-168) interacts with (2E)-4-hydroxy-3-methylbut-2-enyl diphosphate. Residue Cys-198 participates in [4Fe-4S] cluster binding. Ser-226, Ser-227, Asn-228, and Ser-270 together coordinate (2E)-4-hydroxy-3-methylbut-2-enyl diphosphate. Residues Ser-226, Ser-227, Asn-228, and Ser-270 each coordinate dimethylallyl diphosphate. Ser-226, Ser-227, Asn-228, and Ser-270 together coordinate isopentenyl diphosphate.

It belongs to the IspH family. [4Fe-4S] cluster is required as a cofactor.

It catalyses the reaction isopentenyl diphosphate + 2 oxidized [2Fe-2S]-[ferredoxin] + H2O = (2E)-4-hydroxy-3-methylbut-2-enyl diphosphate + 2 reduced [2Fe-2S]-[ferredoxin] + 2 H(+). The enzyme catalyses dimethylallyl diphosphate + 2 oxidized [2Fe-2S]-[ferredoxin] + H2O = (2E)-4-hydroxy-3-methylbut-2-enyl diphosphate + 2 reduced [2Fe-2S]-[ferredoxin] + 2 H(+). It participates in isoprenoid biosynthesis; dimethylallyl diphosphate biosynthesis; dimethylallyl diphosphate from (2E)-4-hydroxy-3-methylbutenyl diphosphate: step 1/1. Its pathway is isoprenoid biosynthesis; isopentenyl diphosphate biosynthesis via DXP pathway; isopentenyl diphosphate from 1-deoxy-D-xylulose 5-phosphate: step 6/6. Its function is as follows. Catalyzes the conversion of 1-hydroxy-2-methyl-2-(E)-butenyl 4-diphosphate (HMBPP) into a mixture of isopentenyl diphosphate (IPP) and dimethylallyl diphosphate (DMAPP). Acts in the terminal step of the DOXP/MEP pathway for isoprenoid precursor biosynthesis. This Pseudomonas entomophila (strain L48) protein is 4-hydroxy-3-methylbut-2-enyl diphosphate reductase.